A 79-amino-acid polypeptide reads, in one-letter code: Conotoxin ArMSGL-0124 (79 aa).

Residues 1-20 form the signal peptide; the sequence is MSRLGIMVLTLLLLVYMATS. A propeptide spanning residues 21–44 is cleaved from the precursor; the sequence is HQDAGEKQATQRDAINFRWKRSLT. Disulfide bonds link C52–C64, C56–C73, and C63–C77. A Leucine amide modification is found at L78.

Belongs to the conotoxin O3 superfamily. As to expression, expressed by the venom duct.

The protein localises to the secreted. The sequence is that of Conotoxin ArMSGL-0124 from Conus arenatus (Sand-dusted cone).